A 426-amino-acid chain; its full sequence is Glutamate-1-semialdehyde 2,1-aminomutase (426 aa).

The residue at position 265 (Lys265) is an N6-(pyridoxal phosphate)lysine.

Belongs to the class-III pyridoxal-phosphate-dependent aminotransferase family. HemL subfamily. Homodimer. The cofactor is pyridoxal 5'-phosphate.

It is found in the cytoplasm. The catalysed reaction is (S)-4-amino-5-oxopentanoate = 5-aminolevulinate. The protein operates within porphyrin-containing compound metabolism; protoporphyrin-IX biosynthesis; 5-aminolevulinate from L-glutamyl-tRNA(Glu): step 2/2. The sequence is that of Glutamate-1-semialdehyde 2,1-aminomutase from Cronobacter sakazakii (strain ATCC BAA-894) (Enterobacter sakazakii).